The sequence spans 1890 residues: Putative aminopeptidase-2 (1890 aa).

Positions 1–20 (MRRKLLLLLCFIGLFSLIST) are cleaved as a signal peptide. A glycan (N-linked (GlcNAc...) asparagine) is linked at N110. Residues E220 and 354 to 358 (GAMEN) each bind substrate. Residue H390 participates in Zn(2+) binding. E391 acts as the Proton acceptor in catalysis. 2 residues coordinate Zn(2+): H394 and E413. N-linked (GlcNAc...) asparagine glycans are attached at residues N534, N581, N785, N803, N914, N1024, and N1094. E1143 contributes to the substrate binding site. The N-linked (GlcNAc...) asparagine glycan is linked to N1245. 1280-1284 (GAMEN) lines the substrate pocket. H1316 contributes to the Zn(2+) binding site. E1317 serves as the catalytic Proton acceptor. Residues H1320 and E1339 each contribute to the Zn(2+) site. N1451, N1521, N1826, and N1841 each carry an N-linked (GlcNAc...) asparagine glycan.

This sequence belongs to the peptidase M1 family. The cofactor is Zn(2+).

Its function is as follows. Putative aminopeptidase which plays a role in oocyte maturation. This is Putative aminopeptidase-2 from Caenorhabditis elegans.